Reading from the N-terminus, the 468-residue chain is MVIFDSVVKKKLEFIPLENDFVRIYVCGPTVYDDAHLGHAKSAISFDLLRRTLVALGFKVKFVKNFTDIDDKILKKMEDSGKSLKEITEFYISRYLDDMNALNVLRADIEPRATECIDEIIEFVEELLDNGAAYKIQGDGIYFDTSKDSDYLSLSGKKDSDENIARVASNAQKKDEKDFALWKFDEKYYKAKFGCGRPGWHTECVVMIKKYLTDNKQKYLIDIHAGGMDLLFPHHENEAAQCRCAEHKNLAKYWMHNGFVQVNNEKMSKSLGNSFFIKDALKIVPGEALRFYLMSSHYRANFNYSVNDLFSSKKRLDKIYRLKKRLQGAKKGISDEKFKAEILDALSDDLNTSLALSIVDSMVNSANERLDKNPKDKMKKGEILANLDFVKETLGILYTDENLYFQFGVSETKKAEISDLIAQRDAAKKEKNFALADEIREKLALQNITLMDTPNGTVWEISNETDIK.

Position 27 (C27) interacts with Zn(2+). A 'HIGH' region motif is present at residues 29–39 (PTVYDDAHLGH). Residues C204, H234, and E238 each contribute to the Zn(2+) site. Residues 266-270 (KMSKS) carry the 'KMSKS' region motif. K269 serves as a coordination point for ATP.

The protein belongs to the class-I aminoacyl-tRNA synthetase family. As to quaternary structure, monomer. Requires Zn(2+) as cofactor.

Its subcellular location is the cytoplasm. The catalysed reaction is tRNA(Cys) + L-cysteine + ATP = L-cysteinyl-tRNA(Cys) + AMP + diphosphate. This chain is Cysteine--tRNA ligase, found in Campylobacter hominis (strain ATCC BAA-381 / DSM 21671 / CCUG 45161 / LMG 19568 / NCTC 13146 / CH001A).